Reading from the N-terminus, the 139-residue chain is Holo-[acyl-carrier-protein] synthase (139 aa).

The Mg(2+) site is built by Asp-8 and Glu-61.

The protein belongs to the P-Pant transferase superfamily. AcpS family. Mg(2+) is required as a cofactor.

The protein resides in the cytoplasm. It carries out the reaction apo-[ACP] + CoA = holo-[ACP] + adenosine 3',5'-bisphosphate + H(+). Its function is as follows. Transfers the 4'-phosphopantetheine moiety from coenzyme A to a Ser of acyl-carrier-protein. The chain is Holo-[acyl-carrier-protein] synthase from Bradyrhizobium diazoefficiens (strain JCM 10833 / BCRC 13528 / IAM 13628 / NBRC 14792 / USDA 110).